A 157-amino-acid polypeptide reads, in one-letter code: ATP synthase subunit delta (157 aa).

This sequence belongs to the ATPase delta chain family. F-type ATPases have 2 components, F(1) - the catalytic core - and F(0) - the membrane proton channel. F(1) has five subunits: alpha(3), beta(3), gamma(1), delta(1), epsilon(1). F(0) has three main subunits: a(1), b(2) and c(10-14). The alpha and beta chains form an alternating ring which encloses part of the gamma chain. F(1) is attached to F(0) by a central stalk formed by the gamma and epsilon chains, while a peripheral stalk is formed by the delta and b chains.

Its subcellular location is the cell membrane. F(1)F(0) ATP synthase produces ATP from ADP in the presence of a proton or sodium gradient. F-type ATPases consist of two structural domains, F(1) containing the extramembraneous catalytic core and F(0) containing the membrane proton channel, linked together by a central stalk and a peripheral stalk. During catalysis, ATP synthesis in the catalytic domain of F(1) is coupled via a rotary mechanism of the central stalk subunits to proton translocation. Functionally, this protein is part of the stalk that links CF(0) to CF(1). It either transmits conformational changes from CF(0) to CF(1) or is implicated in proton conduction. The chain is ATP synthase subunit delta from Chloroflexus aurantiacus (strain ATCC 29364 / DSM 637 / Y-400-fl).